Consider the following 1215-residue polypeptide: MAERGQQPPPAKRLCCRPGGGGGGGGSSGGGGGAGGGYSSACRPGPRAGGAAAAAACGGGAALGLLPPGKTQSPESLLDIAARRVAEKWPFQRVEERFERIPEPVQRRIVYWSFPRSEREICMYSSFNTGGGAAGGPGDDSGGGGGAGGGGGGGSSSSPAATSAAATSAAAAAAAAAAAAAAAAGAGAPSVGAAGAADGGDETRLPFRRGIALLESGCVDNVLQVGFHLSGTVTEPAIQSEPETVCNVAISFDRCKITSVTCSCGNKDIFYCAHVVALSLYRIRKPDQVKLHLPISETLFQMNRDQLQKFVQYLITVHHTEVLPTAQKLADEILSQNSEINQVHGAPDPTAGASIDDENCWHLDEEQVQEQVKLFLSQGGYHGSGKQLNLLFAKVREMLKMRDSNGARMLTLITEQFMADPRLSLWRQQGTAMTDKYRQLWDELGALWMCIVLNPHCKLEQKASWLKQLKKWNSVDVCPWEDGNHGSELPNLTNALPQGANANQDSSNRPHRTVFTRAIEACDLHWQDSHLQHIISSDLYTNYCYHDDTENSLFDSRGWPLWHEHVPTACARVDALRSHGYPREALRLAIAIVNTLRRQQQKQLEMFRTQKKELPHKNITSITNLEGWVGHPLDPVGTLFSSLMEACRIDDENLSGFSDFTENMGQCKSLEYQHLPAHKFLEEGESYLTLAVEVALIGLGQQRIMPDGLYTQEKVCRNEEQLISKLQEIELDDTLVKIFRKQAVFLLEAGPYSGLGEIIHRESVPMHTFAKYLFTSLLPHDAELAYKIALRAMRLLVLESTAPSGDLTRPHHIASVVPNRYPRWFTLSHIESQQCELASTMLTAAKGDVRRLETVLESIQKNIHSSSHIFKLAQDAFKIATLMDSLPDITLLKVSLELGLQVMRMTLSTLNWRRREMVRWLVTCATEVGVYALDSIMQTWFTLFTPTEATSIVATTVMSNSTIVRLHLDCHQQEKLASSARTLALQCAMKDPQNCALSALTLCEKDHIAFETAYQIVLDAATTGMSYTQLFTIARYMEHRGYPMRAYKLATLAMTHLNLSYNQDTHPAINDVLWACALSHSLGKNELAAIIPLVVKSVKCATVLSDILRRCTLTTPGMVGLHGRRNSGKLMSLDKAPLRQLLDATIGAYINTTHSRLTHISPRHYSEFIEFLSKARETFLMAHDGHIQFTQFIDNLKQIYKGKKKLMMLVRERFG.

Disordered regions lie at residues 1–46 (MAER…RPGP) and 133–161 (AAGG…SPAA). Composition is skewed to gly residues over residues 18 to 38 (PGGG…GGGY) and 133 to 155 (AAGG…GGGS). The segment at 246-283 (CNVAISFDRCKITSVTCSCGNKDIFYCAHVVALSLYRI) adopts an SWIM-type zinc-finger fold.

Involved in nervous system development, important for striatal morphology and motor regulation. This Homo sapiens (Human) protein is Zinc finger SWIM domain-containing protein 6.